Here is a 464-residue protein sequence, read N- to C-terminus: UDP-N-acetylmuramate--L-alanine ligase (464 aa).

117-123 (GTHGKTT) contacts ATP.

Belongs to the MurCDEF family.

The protein resides in the cytoplasm. The catalysed reaction is UDP-N-acetyl-alpha-D-muramate + L-alanine + ATP = UDP-N-acetyl-alpha-D-muramoyl-L-alanine + ADP + phosphate + H(+). The protein operates within cell wall biogenesis; peptidoglycan biosynthesis. Functionally, cell wall formation. In Streptomyces avermitilis (strain ATCC 31267 / DSM 46492 / JCM 5070 / NBRC 14893 / NCIMB 12804 / NRRL 8165 / MA-4680), this protein is UDP-N-acetylmuramate--L-alanine ligase.